A 144-amino-acid polypeptide reads, in one-letter code: Large ribosomal subunit protein uL15 (144 aa).

The segment at 1–45 (MNLNTLSPDPGSRPSRRRVGRGIGSGLGKTCGKGHKGQKSRAGGY) is disordered. Residues 21–31 (RGIGSGLGKTC) show a composition bias toward gly residues.

Belongs to the universal ribosomal protein uL15 family. As to quaternary structure, part of the 50S ribosomal subunit.

Functionally, binds to the 23S rRNA. The sequence is that of Large ribosomal subunit protein uL15 from Legionella pneumophila (strain Paris).